Consider the following 175-residue polypeptide: Large ribosomal subunit protein uL10 (175 aa).

Belongs to the universal ribosomal protein uL10 family. As to quaternary structure, part of the ribosomal stalk of the 50S ribosomal subunit. The N-terminus interacts with L11 and the large rRNA to form the base of the stalk. The C-terminus forms an elongated spine to which L12 dimers bind in a sequential fashion forming a multimeric L10(L12)X complex.

In terms of biological role, forms part of the ribosomal stalk, playing a central role in the interaction of the ribosome with GTP-bound translation factors. This Prochlorococcus marinus (strain MIT 9211) protein is Large ribosomal subunit protein uL10.